The following is a 300-amino-acid chain: Ribosomal RNA small subunit methyltransferase H (300 aa).

S-adenosyl-L-methionine contacts are provided by residues 43 to 45, Asp-60, Asp-105, and Gln-112; that span reads AGH.

The protein belongs to the methyltransferase superfamily. RsmH family.

The protein resides in the cytoplasm. The enzyme catalyses cytidine(1402) in 16S rRNA + S-adenosyl-L-methionine = N(4)-methylcytidine(1402) in 16S rRNA + S-adenosyl-L-homocysteine + H(+). Specifically methylates the N4 position of cytidine in position 1402 (C1402) of 16S rRNA. The polypeptide is Ribosomal RNA small subunit methyltransferase H (Deinococcus deserti (strain DSM 17065 / CIP 109153 / LMG 22923 / VCD115)).